A 549-amino-acid polypeptide reads, in one-letter code: MGVVAEVWRSSVRLLTNSPQLNGGSHKSALWKWRFFSAQPKRTVMWTWVCGFMLFSLGVISLFTGHVVSHLEWYSQQLSKRSLLDMSRREPIDVWKSKYSKFFYGCSERGRNFLPAVQEQSSNGYLLIAASGGLNQQRTGITDAVVVARILNATLVVPELDHHSYWKDDSDFSDIFDVNWFISSLAKDVTIVKRVPDRVMRAMEKPPYTTRVPRKSTLEYYLDQVLPILTRRHVLQLTKFDYRLANDLDEDMQKLRCRVNYHALRFTKRIQSVGMKVVKRMRKMAKRFIAVHLRFEPDMLAFSGCDFGGGEKERAELAEIRKRWDTLPDLDPLEERKRGKCPLTPHEVGLMLRALGFTNDTYIYVASGEIYGGEKTLKPLRELFPNFYTKEMLANDELKPLLPYSSRLAAIDYIVSDESDVFITNNNGNMAKILAGRRRYMGHKRTIRPNAKKLSALFMDREKMEWQTFAKKVKSCQRGFMGDPDEFKPGRGEFHEYPQSCICQRPFSYDKTSTDDEEEDMSEENHNSTSPGHVHLSSADNERDEVFPD.

A helical; Signal-anchor for type II membrane protein membrane pass occupies residues Thr43–Phe63. Residue Asn152 is glycosylated (N-linked (GlcNAc...) asparagine). His292–Arg294 serves as a coordination point for substrate. N-linked (GlcNAc...) asparagine glycans are attached at residues Asn359 and Asn527. A disordered region spans residues Pro506–Asp549. A compositionally biased stretch (basic and acidic residues) spans Asp540–Asp549.

Belongs to the glycosyltransferase GT106 family.

The protein resides in the membrane. It participates in glycan metabolism. The polypeptide is O-fucosyltransferase 29 (Arabidopsis thaliana (Mouse-ear cress)).